Reading from the N-terminus, the 277-residue chain is MADQRPLMTWLEANNYESFLQEDIFSFLDQSLFVDPHSSFIDPFKDFQTQNWFSLQDSIVNHISTTFAADHTFLASLDLEAISSTFSLDISSGWWNENNGNYNNQVEPNLDEISRTNTMGDPNMEQILHEDVNTMKEKTSQKRIIMKRRYREDGVINNMSREMMKQYFYMPITKAAKELNIGVTLLKKRCRELGIPRWPHRKLTSLNALIANLKDLLGNTKGRTPKSKLRNALELLEMEKKMIEEVPDLEFGDKTKRLRQACFKAKYKRRRLFSSSS.

Positions 142-226 constitute an RWP-RK domain; that stretch reads KRIIMKRRYR…LGNTKGRTPK (85 aa). Residues 201–246 adopt a coiled-coil conformation; it reads RKLTSLNALIANLKDLLGNTKGRTPKSKLRNALELLEMEKKMIEEV.

It is found in the nucleus. Putative transcription factor. The protein is Protein RKD3 (RKD3) of Arabidopsis thaliana (Mouse-ear cress).